The primary structure comprises 244 residues: WUSCHEL-related homeobox 3 (244 aa).

Residues 4–68 (VASTRWCPTP…NHKARDRQKL (65 aa)) constitute a DNA-binding region (homeobox; WUS-type).

Belongs to the WUS homeobox family. In terms of tissue distribution, expressed in aerial parts of seedlings, inflorescences and flowers at low level. Expressed in a restricted number of L1 cells at the lateral regions of flower primordia.

It localises to the nucleus. Functionally, probable transcription factor required to initiate organ founder cells in a lateral domain of shoot meristems. Involved in the lateral sepal axis-dependent development of flowers, probably by regulating the proliferation of L1 cells at the lateral region of flower primordia. Required for the formation of the margin cells of the first and second whorl organs. The chain is WUSCHEL-related homeobox 3 (WOX3) from Arabidopsis thaliana (Mouse-ear cress).